A 367-amino-acid polypeptide reads, in one-letter code: Glutamate 5-kinase (367 aa).

Lys-10 contributes to the ATP binding site. Substrate-binding residues include Ser-50, Asp-137, and Asn-149. ATP contacts are provided by residues Thr-169–Asp-170 and Thr-211–Lys-217. The PUA domain maps to Ala-275–Glu-353.

Belongs to the glutamate 5-kinase family.

The protein resides in the cytoplasm. The catalysed reaction is L-glutamate + ATP = L-glutamyl 5-phosphate + ADP. It functions in the pathway amino-acid biosynthesis; L-proline biosynthesis; L-glutamate 5-semialdehyde from L-glutamate: step 1/2. Functionally, catalyzes the transfer of a phosphate group to glutamate to form L-glutamate 5-phosphate. The polypeptide is Glutamate 5-kinase (Escherichia fergusonii (strain ATCC 35469 / DSM 13698 / CCUG 18766 / IAM 14443 / JCM 21226 / LMG 7866 / NBRC 102419 / NCTC 12128 / CDC 0568-73)).